The chain runs to 470 residues: Poly(A) polymerase catalytic subunit (470 aa).

Residues aspartate 192 and aspartate 194 contribute to the active site.

Belongs to the poxviridae poly(A) polymerase catalytic subunit family. As to quaternary structure, heterodimer of a large (catalytic) subunit and a small (regulatory) subunit.

It catalyses the reaction RNA(n) + ATP = RNA(n)-3'-adenine ribonucleotide + diphosphate. Functionally, polymerase that creates the 3'-poly(A) tail of mRNA's. The chain is Poly(A) polymerase catalytic subunit (PAPL) from Odocoileus hemionus (Mule deer).